A 383-amino-acid chain; its full sequence is Protein RecA (383 aa).

79–86 (GPESSGKT) is a binding site for ATP.

Belongs to the RecA family.

Its subcellular location is the cytoplasm. In terms of biological role, can catalyze the hydrolysis of ATP in the presence of single-stranded DNA, the ATP-dependent uptake of single-stranded DNA by duplex DNA, and the ATP-dependent hybridization of homologous single-stranded DNAs. It interacts with LexA causing its activation and leading to its autocatalytic cleavage. This Streptococcus gordonii (strain Challis / ATCC 35105 / BCRC 15272 / CH1 / DL1 / V288) protein is Protein RecA.